A 492-amino-acid chain; its full sequence is MKISNLLAAFLAFSGGFFCASAEVPKVNKEGLNELITADKVLMVKFYAPWCGHCKALAPEYESAADELEKDGISLVEVDCTEEGDLCSEYSIRGYPTLNVFKNGKQISQYSGPRKHDALVKYMRKQLLPTVKPISKDTLENFVEKADDLAVVAFFKDQKLNDTYTEVAEVMKDDFVFAASDDKELAKSLGSNFPGIVAFTKDAAQDSDKLVYTGDWDPASIADFIGVSSIPLLDELNQMTFGKYQQSGLPLGIIFYNSTESRDELYDVFQPLAKKYQDTLRFAFLDAVRYGAVAKQMNVESDWPAFVIANLKSMLKYPFPTTELTAKAMTKFVGDFVDGKLQPKIKSQPIPESQEDLVVLVADNFDDIVMDETKDVLVEFYAPWCGHCKNLAPTYEKLAEEYSDDSNVVVAKIDATENDISVSISGFPTIMFFKANDKVNPVRYEGDRTLEDLSAFIDKHASFEPIKKEKESVPAPDLEDQVAVEDEMADEL.

An N-terminal signal peptide occupies residues 1-22 (MKISNLLAAFLAFSGGFFCASA). Residues 23–128 (EVPKVNKEGL…LVKYMRKQLL (106 aa)) enclose the Thioredoxin 1 domain. Active-site nucleophile residues include C51 and C54. Residues C51 and C54 are joined by a disulfide bond. N161 and N257 each carry an N-linked (GlcNAc...) asparagine glycan. Positions 323 to 462 (ELTAKAMTKF…LSAFIDKHAS (140 aa)) constitute a Thioredoxin 2 domain. Residues C385 and C388 each act as nucleophile in the active site. The cysteines at positions 385 and 388 are disulfide-linked. The disordered stretch occupies residues 468–492 (KEKESVPAPDLEDQVAVEDEMADEL). Acidic residues predominate over residues 477–492 (DLEDQVAVEDEMADEL). A Prevents secretion from ER motif is present at residues 489 to 492 (ADEL).

It belongs to the protein disulfide isomerase family.

It localises to the endoplasmic reticulum lumen. It carries out the reaction Catalyzes the rearrangement of -S-S- bonds in proteins.. Participates in the folding of proteins containing disulfide bonds, may be involved in glycosylation, prolyl hydroxylation and triglyceride transfer. The polypeptide is Putative protein disulfide-isomerase C1F5.02 (Schizosaccharomyces pombe (strain 972 / ATCC 24843) (Fission yeast)).